The primary structure comprises 474 residues: Glutathione synthetase (474 aa).

A substrate-binding site is contributed by Arg125. Glu144 provides a ligand contact to ATP. Mg(2+)-binding residues include Glu144 and Asn146. Substrate is bound by residues 148–151, 214–216, Gln220, and 267–270; these read IAAS, QRN, and RTGY. ATP contacts are provided by residues Lys305, 364–373, Tyr375, 398–401, and Glu425; these read KPQREGGGNN and MDKI. Glu368 is a binding site for Mg(2+). Substrate is bound at residue Arg450. The ATP site is built by Lys452 and Asp458. Residue 461-462 coordinates substrate; it reads VA.

This sequence belongs to the eukaryotic GSH synthase family. In terms of assembly, homodimer. The cofactor is Mg(2+). In terms of tissue distribution, expressed ubiquitously.

The enzyme catalyses gamma-L-glutamyl-L-cysteine + glycine + ATP = glutathione + ADP + phosphate + H(+). The catalysed reaction is gamma-L-glutamyl-(2S)-2-aminobutanoate + glycine + ATP = ophthalmate + ADP + phosphate + H(+). It functions in the pathway sulfur metabolism; glutathione biosynthesis; glutathione from L-cysteine and L-glutamate: step 2/2. Its function is as follows. Catalyzes the production of glutathione from gamma-glutamylcysteine and glycine in an ATP-dependent manner. Glutathione (gamma-glutamylcysteinylglycine, GSH) is the most abundant intracellular thiol in living aerobic cells and is required for numerous processes including the protection of cells against oxidative damage, amino acid transport, the detoxification of foreign compounds, the maintenance of protein sulfhydryl groups in a reduced state and acts as a cofactor for a number of enzymes. Participates in ophthalmate biosynthesis in hepatocytes. This Xenopus laevis (African clawed frog) protein is Glutathione synthetase.